A 305-amino-acid chain; its full sequence is Major fimbrium anchoring subunit FimB (305 aa).

Residues 1 to 22 (MNDAKKYIVSVLILLVAGMFGG) form the signal peptide. A lipid anchor (N-palmitoyl cysteine) is attached at cysteine 23. Residue cysteine 23 is the site of S-diacylglycerol cysteine attachment.

This sequence belongs to the bacteroidetes fimbrillin superfamily. FimB/Mfa2 family. FimB is not part of the fimbrium itself, but anchors the fimbrium in the outer membrane. Linear, head-to-tail oligomerization of fimbrial subunits mediates assembly of the fimbrium stalk, while the minor components FimC, FimD and FimE probably form the fimbrium tip. The anchoring subunit FimB limits fimbrium length and is important for solid fimbrium attachment to the outer membrane. In its absence, the major fimbriae become very long and are easily detached from the membrane.

Its subcellular location is the cell outer membrane. In terms of biological role, anchoring subunit of the major fimbriae. Regulates fimbrial length. These filamentous pili are attached to the cell surface; they mediate biofilm formation, adhesion onto host cells and onto other bacteria that are part of the oral microbiome. Fimbriae of P.gingivalis are major virulence factors. The protein is Major fimbrium anchoring subunit FimB of Porphyromonas gingivalis (Bacteroides gingivalis).